The chain runs to 275 residues: 4-hydroxy-3-methylbut-2-enyl diphosphate reductase (275 aa).

Cys-12 contributes to the [4Fe-4S] cluster binding site. Residues His-36 and His-70 each coordinate (2E)-4-hydroxy-3-methylbut-2-enyl diphosphate. The dimethylallyl diphosphate site is built by His-36 and His-70. 2 residues coordinate isopentenyl diphosphate: His-36 and His-70. Cys-92 is a binding site for [4Fe-4S] cluster. His-120 contributes to the (2E)-4-hydroxy-3-methylbut-2-enyl diphosphate binding site. Residue His-120 coordinates dimethylallyl diphosphate. Residue His-120 coordinates isopentenyl diphosphate. Glu-122 (proton donor) is an active-site residue. A (2E)-4-hydroxy-3-methylbut-2-enyl diphosphate-binding site is contributed by Thr-158. Cys-186 lines the [4Fe-4S] cluster pocket. The (2E)-4-hydroxy-3-methylbut-2-enyl diphosphate site is built by Ser-214, Ser-215, Asn-216, and Ser-258. Positions 214, 215, 216, and 258 each coordinate dimethylallyl diphosphate. 4 residues coordinate isopentenyl diphosphate: Ser-214, Ser-215, Asn-216, and Ser-258.

Belongs to the IspH family. It depends on [4Fe-4S] cluster as a cofactor.

It catalyses the reaction isopentenyl diphosphate + 2 oxidized [2Fe-2S]-[ferredoxin] + H2O = (2E)-4-hydroxy-3-methylbut-2-enyl diphosphate + 2 reduced [2Fe-2S]-[ferredoxin] + 2 H(+). The catalysed reaction is dimethylallyl diphosphate + 2 oxidized [2Fe-2S]-[ferredoxin] + H2O = (2E)-4-hydroxy-3-methylbut-2-enyl diphosphate + 2 reduced [2Fe-2S]-[ferredoxin] + 2 H(+). Its pathway is isoprenoid biosynthesis; dimethylallyl diphosphate biosynthesis; dimethylallyl diphosphate from (2E)-4-hydroxy-3-methylbutenyl diphosphate: step 1/1. It participates in isoprenoid biosynthesis; isopentenyl diphosphate biosynthesis via DXP pathway; isopentenyl diphosphate from 1-deoxy-D-xylulose 5-phosphate: step 6/6. Functionally, catalyzes the conversion of 1-hydroxy-2-methyl-2-(E)-butenyl 4-diphosphate (HMBPP) into a mixture of isopentenyl diphosphate (IPP) and dimethylallyl diphosphate (DMAPP). Acts in the terminal step of the DOXP/MEP pathway for isoprenoid precursor biosynthesis. The protein is 4-hydroxy-3-methylbut-2-enyl diphosphate reductase of Sulfurimonas denitrificans (strain ATCC 33889 / DSM 1251) (Thiomicrospira denitrificans (strain ATCC 33889 / DSM 1251)).